The sequence spans 482 residues: MKFIIKLFPEITIKSQSVRLRFIKILTGNIRNVLKHYDETLAVVRHWDNIEVRAKDENQRLAIRDALTRIPGIHHILEVEDVPFTDMHDIFEKALVQYRDQLEGKTFCVRVKRRGKHDFSSIDVERYVGGGLNQHIESARVKLTNPDVTVHLEVEDDRLLLIKGRYEGIGGFPIGTQEDVLSLISGGFDSGVSSYMLMRRGCRVHYCFFNLGGAAHEIGVRQVAHYLWNRFGSSHRVRFVAINFEPVVGEILEKIDDGQMGVILKRMMVRAASKVAERYGVQALVTGEALGQVSSQTLTNLRLIDNVSDTLILRPLISYDKEHIINLARQIGTEDFARTMPEYCGVISKSPTVKAVKSKIEAEEEKFDFSILDKVVEEANNVDIREIAQQTEQEVVEVETVNGFGPNDVILDIRSIDEQEDKPLKVEGIDVVSLPFYKLSTKFGDLDQSKTWLLWCERGVMSRLQALYLREQGFNNVKVYRP.

A THUMP domain is found at 61–165 (LAIRDALTRI…DDRLLLIKGR (105 aa)). Residues 183 to 184 (LI), K265, G287, and Q296 each bind ATP. C344 and C456 form a disulfide bridge. The 79-residue stretch at 404–482 (FGPNDVILDI…GFNNVKVYRP (79 aa)) folds into the Rhodanese domain. The active-site Cysteine persulfide intermediate is the C456.

It belongs to the ThiI family.

It localises to the cytoplasm. It catalyses the reaction [ThiI sulfur-carrier protein]-S-sulfanyl-L-cysteine + a uridine in tRNA + 2 reduced [2Fe-2S]-[ferredoxin] + ATP + H(+) = [ThiI sulfur-carrier protein]-L-cysteine + a 4-thiouridine in tRNA + 2 oxidized [2Fe-2S]-[ferredoxin] + AMP + diphosphate. The catalysed reaction is [ThiS sulfur-carrier protein]-C-terminal Gly-Gly-AMP + S-sulfanyl-L-cysteinyl-[cysteine desulfurase] + AH2 = [ThiS sulfur-carrier protein]-C-terminal-Gly-aminoethanethioate + L-cysteinyl-[cysteine desulfurase] + A + AMP + 2 H(+). The protein operates within cofactor biosynthesis; thiamine diphosphate biosynthesis. In terms of biological role, catalyzes the ATP-dependent transfer of a sulfur to tRNA to produce 4-thiouridine in position 8 of tRNAs, which functions as a near-UV photosensor. Also catalyzes the transfer of sulfur to the sulfur carrier protein ThiS, forming ThiS-thiocarboxylate. This is a step in the synthesis of thiazole, in the thiamine biosynthesis pathway. The sulfur is donated as persulfide by IscS. This chain is tRNA sulfurtransferase, found in Escherichia coli O127:H6 (strain E2348/69 / EPEC).